Here is a 253-residue protein sequence, read N- to C-terminus: Acidic 26 kDa endochitinase (253 aa).

Residues 1–24 form the signal peptide; the sequence is MKFNIVSPVALSCLFFLFLTGTLA. Glutamate 92 (proton donor) is an active-site residue. Cysteine 212 and cysteine 244 are oxidised to a cystine.

It belongs to the glycosyl hydrolase 19 family. Chitinase class II subfamily.

It is found in the secreted. The protein resides in the extracellular space. The catalysed reaction is Random endo-hydrolysis of N-acetyl-beta-D-glucosaminide (1-&gt;4)-beta-linkages in chitin and chitodextrins.. Functionally, defense against chitin-containing fungal pathogens. This is Acidic 26 kDa endochitinase (CHI3) from Solanum lycopersicum (Tomato).